The sequence spans 327 residues: 2-phosphoglycerate kinase (327 aa).

Over residues 1–20 (MSEKSSRKERDEKTEKETAR) the composition is skewed to basic and acidic residues. Residues 1-27 (MSEKSSRKERDEKTEKETARQGKHRRI) are disordered. The ATP-cone domain occupies 25–111 (RRIRVKSRHY…LWRRIKKREE (87 aa)).

Belongs to the 2-phosphoglycerate kinase family. It depends on a divalent metal cation as a cofactor.

The enzyme catalyses (2R)-2-phosphoglycerate + ATP = (2R)-2,3-bisphosphoglycerate + ADP + H(+). It functions in the pathway thermoadapter biosynthesis; cyclic 2,3-diphosphoglycerate biosynthesis; cyclic 2,3-diphosphoglycerate from 2-phospho-D-glycerate: step 1/2. In terms of biological role, catalyzes the phosphorylation of 2-phosphoglycerate to 2,3-diphosphoglycerate. Involved in the biosynthesis of cyclic 2,3-bisphosphoglycerate, a thermoprotectant. The sequence is that of 2-phosphoglycerate kinase from Methanopyrus kandleri (strain AV19 / DSM 6324 / JCM 9639 / NBRC 100938).